Consider the following 463-residue polypeptide: SCF E3 ubiquitin ligase complex F-box protein pof2 (463 aa).

The region spanning 1–42 is the F-box domain; it reads MRVPNEVCFNILSYLEADELRCKSTVCTSWRNFIIPTLWEKV. LRR repeat units follow at residues 145–170, 171–196, 198–220, 225–247, 249–271, 278–299, 304–326, 328–353, 354–378, and 380–405; these read CPNLKALNIGNCGLVEDTGMVQIIKR, CPYLNRLIIPNCRKLTDVSLQILSEK, DLIELDISGCEGFHNADTLSRLV, GLKELSMDGCTELSHFITFLNLN, ELDAMRALSLNNLPDLKDSDIEL, KLNSLFLSKCIGLTDSSLLSLT, SLTTLHLGHCYEITDIGVQCLLK, CKNITYIDFGGCLRLSDIAVSAIAKL, PYLQRVGLVKCICLTDLSVILLSGS, and SRNLERVHLSYCIGLTAKSVSYLMYN.

As to quaternary structure, part of a SCF E3 ubiquitin ligase complex. Interacts with skp1.

The protein localises to the mitochondrion. Its function is as follows. Involved in substrate recognition in ubiquitin-dependent degradation. In Schizosaccharomyces pombe (strain 972 / ATCC 24843) (Fission yeast), this protein is SCF E3 ubiquitin ligase complex F-box protein pof2 (pof2).